A 564-amino-acid chain; its full sequence is Protein glycosylation K (564 aa).

Residues 1 to 15 (MLKKLFFILSKEDKN) are Cytoplasmic-facing. Residues 16–38 (FLFFLLVFSVFISFIETFAISLV) traverse the membrane as a helical segment. Residues 17–319 (LFFLLVFSVF…IITSYHDLLY (303 aa)) form the ABC transmembrane type-1 domain. The Extracellular segment spans residues 39 to 76 (MPFITLASDFSYFDRNKYLISLKEYLNIPVFEIIVYFG). The important for stimulation of ATPase activity by lipid-linked oligosaccharides and subsequent translocation of lipid-linked oligosaccharides stretch occupies residues 46-67 (SDFSYFDRNKYLISLKEYLNIP). Residues 77 to 98 (VGLIVFYVFRALLNAYYFHLLA) traverse the membrane as a helical segment. The Cytoplasmic segment spans residues 99 to 149 (RFSKGRYHAIAYKVFSKFLNINYEKFTQKNQSEILKSITGEVYNLSTMISS). The chain crosses the membrane as a helical span at residues 150-170 (FLLLMSEIFVVLLLYALMLLI). Residues 171–173 (NYK) lie on the Extracellular side of the membrane. A helical transmembrane segment spans residues 174 to 197 (ITLFLSIFMVLNAFILVKILSPII). Residues 198–254 (KKAGVRREEAMKNFFEILNTNLNNFKFIKLKTKEDGVLSLFKAQSEAFSKANITNES) are Cytoplasmic-facing. A helical transmembrane segment spans residues 255-276 (VAAVPRIYLEGIGFCVLVFIVV). Residues 277–292 (FLVLKNESDISGILST) are Extracellular-facing. Residues 293-314 (ISIFVLALYRLMPSANRIITSY) traverse the membrane as a helical segment. Over 315-564 (HDLLYYHSSL…LEHGKLKEEK (250 aa)) the chain is Cytoplasmic. An ABC transporter domain is found at 349–564 (LKICNLSFGY…LEHGKLKEEK (216 aa)). 382–389 (GESGCGKS) contributes to the ATP binding site.

Belongs to the ABC transporter superfamily. As to quaternary structure, homodimer; domain-swapped. Helices that arise in transmembrane regions 4 and 5 from one subunit cross over and contact the nucleotide-binding domain from the other subunit.

Its subcellular location is the cell inner membrane. It carries out the reaction ATP + H2O + lipopolysaccharideSide 1 = ADP + phosphate + lipopolysaccharideSide 2.. It participates in protein modification; protein glycosylation. Functionally, mediates the ATP-dependent translocation of the undecaprenylpyrophosphate-linked heptasaccharide intermediate across the cell membrane; this is an essential step during the N-linked protein glycosylation pathway. Transport across the membrane is effected via ATP-driven conformation changes. Most likely, only the polar and charged part of the glycolipid enter the substrate-binding cavity, and the lipid tail remains exposed to the membrane lipids during the transmembrane flipping process. In Campylobacter jejuni subsp. jejuni serotype O:2 (strain ATCC 700819 / NCTC 11168), this protein is Protein glycosylation K (pglK).